The chain runs to 23 residues: Aurein-4.1 (23 aa).

The protein belongs to the frog skin active peptide (FSAP) family. Aurein subfamily. In terms of tissue distribution, expressed by the skin dorsal glands.

It localises to the secreted. Functionally, has no antimicrobial or anticancer activity. The polypeptide is Aurein-4.1 (Ranoidea aurea (Green and golden bell frog)).